The following is a 142-amino-acid chain: Large ribosomal subunit protein uL16 (142 aa).

The protein belongs to the universal ribosomal protein uL16 family. As to quaternary structure, part of the 50S ribosomal subunit.

Its function is as follows. Binds 23S rRNA and is also seen to make contacts with the A and possibly P site tRNAs. The chain is Large ribosomal subunit protein uL16 from Trichormus variabilis (strain ATCC 29413 / PCC 7937) (Anabaena variabilis).